The chain runs to 159 residues: Large ribosomal subunit protein uL10 (159 aa).

This sequence belongs to the universal ribosomal protein uL10 family. In terms of assembly, part of the ribosomal stalk of the 50S ribosomal subunit. The N-terminus interacts with L11 and the large rRNA to form the base of the stalk. The C-terminus forms an elongated spine to which L12 dimers bind in a sequential fashion forming a multimeric L10(L12)X complex.

Its function is as follows. Forms part of the ribosomal stalk, playing a central role in the interaction of the ribosome with GTP-bound translation factors. This chain is Large ribosomal subunit protein uL10, found in Campylobacter lari (strain RM2100 / D67 / ATCC BAA-1060).